The following is a 347-amino-acid chain: NADH-ubiquinone oxidoreductase chain 2 (347 aa).

The next 10 helical transmembrane spans lie at 3-23, 25-45, 59-79, 111-131, 149-169, 178-198, 201-221, 242-262, 274-294, and 325-345; these read PIVF…VMMS, HWLM…PILM, YFLT…INLM, FHFW…LILL, INLD…GWGG, IMAY…TYNP, TMLN…LLML, SLIL…GFIP, NSII…YFYL, and LLPT…TMSI.

The protein belongs to the complex I subunit 2 family. As to quaternary structure, core subunit of respiratory chain NADH dehydrogenase (Complex I) which is composed of 45 different subunits. Interacts with TMEM242.

The protein resides in the mitochondrion inner membrane. It catalyses the reaction a ubiquinone + NADH + 5 H(+)(in) = a ubiquinol + NAD(+) + 4 H(+)(out). In terms of biological role, core subunit of the mitochondrial membrane respiratory chain NADH dehydrogenase (Complex I) which catalyzes electron transfer from NADH through the respiratory chain, using ubiquinone as an electron acceptor. Essential for the catalytic activity and assembly of complex I. In Rhinoceros unicornis (Greater Indian rhinoceros), this protein is NADH-ubiquinone oxidoreductase chain 2.